A 340-amino-acid polypeptide reads, in one-letter code: Uroporphyrinogen decarboxylase (340 aa).

Residues 21–25 (RQAGR), Asp-71, Tyr-148, Ser-203, and His-316 contribute to the substrate site.

Belongs to the uroporphyrinogen decarboxylase family. As to quaternary structure, homodimer.

It is found in the cytoplasm. The catalysed reaction is uroporphyrinogen III + 4 H(+) = coproporphyrinogen III + 4 CO2. It functions in the pathway porphyrin-containing compound metabolism; protoporphyrin-IX biosynthesis; coproporphyrinogen-III from 5-aminolevulinate: step 4/4. In terms of biological role, catalyzes the decarboxylation of four acetate groups of uroporphyrinogen-III to yield coproporphyrinogen-III. In Campylobacter jejuni subsp. jejuni serotype O:6 (strain 81116 / NCTC 11828), this protein is Uroporphyrinogen decarboxylase.